The chain runs to 338 residues: Aspartate-semialdehyde dehydrogenase (338 aa).

NADP(+) is bound by residues 13–16 (SGAV) and 41–42 (RS). R101 serves as a coordination point for phosphate. The Acyl-thioester intermediate role is filled by C132. Residue Q159 coordinates substrate. 162–163 (SG) provides a ligand contact to NADP(+). K216 contacts phosphate. R238 is a substrate binding site. Residue H245 is the Proton acceptor of the active site. N317 is an NADP(+) binding site.

It belongs to the aspartate-semialdehyde dehydrogenase family. Homodimer.

The catalysed reaction is L-aspartate 4-semialdehyde + phosphate + NADP(+) = 4-phospho-L-aspartate + NADPH + H(+). Its pathway is amino-acid biosynthesis; L-lysine biosynthesis via DAP pathway; (S)-tetrahydrodipicolinate from L-aspartate: step 2/4. It participates in amino-acid biosynthesis; L-methionine biosynthesis via de novo pathway; L-homoserine from L-aspartate: step 2/3. The protein operates within amino-acid biosynthesis; L-threonine biosynthesis; L-threonine from L-aspartate: step 2/5. In terms of biological role, catalyzes the NADPH-dependent formation of L-aspartate-semialdehyde (L-ASA) by the reductive dephosphorylation of L-aspartyl-4-phosphate. This chain is Aspartate-semialdehyde dehydrogenase, found in Shewanella violacea (strain JCM 10179 / CIP 106290 / LMG 19151 / DSS12).